Here is a 113-residue protein sequence, read N- to C-terminus: Large ribosomal subunit protein uL24 (113 aa).

Belongs to the universal ribosomal protein uL24 family. As to quaternary structure, part of the 50S ribosomal subunit.

One of two assembly initiator proteins, it binds directly to the 5'-end of the 23S rRNA, where it nucleates assembly of the 50S subunit. Functionally, one of the proteins that surrounds the polypeptide exit tunnel on the outside of the subunit. The polypeptide is Large ribosomal subunit protein uL24 (Micrococcus luteus (strain ATCC 4698 / DSM 20030 / JCM 1464 / CCM 169 / CCUG 5858 / IAM 1056 / NBRC 3333 / NCIMB 9278 / NCTC 2665 / VKM Ac-2230) (Micrococcus lysodeikticus)).